Here is an 81-residue protein sequence, read N- to C-terminus: Cytochrome c oxidase subunit 7A1, mitochondrial (81 aa).

A mitochondrion-targeting transit peptide spans 1–21 (MRHLLGLPQLASRAFSTTVRQ). Residues 51–72 (ILYRLTMTLTVVGTGYSLYWLL) form a helical membrane-spanning segment.

This sequence belongs to the cytochrome c oxidase VIIa family. In terms of assembly, component of the complex IV (CIV, cytochrome c oxidase). The complex exists as a monomer or a dimer and forms supercomplexes (SCs) in the inner mitochondrial membrane with NADH-ubiquinone oxidoreductase (complex I, CI) and ubiquinol-cytochrome c oxidoreductase (cytochrome b-c1 complex, complex III, CIII), resulting in different assemblies (supercomplex SCI(1)III(2)IV(1) and megacomplex MCI(2)III(2)IV(2)).

Its subcellular location is the mitochondrion inner membrane. The protein operates within energy metabolism; oxidative phosphorylation. Its function is as follows. Component of the mitochondrial respiratory complex IV (CIV, also named cytochrome c oxidase complex), the last enzyme in the mitochondrial electron transport chain which drives oxidative phosphorylation. The CIV complex is the component of the respiratory chain that catalyzes the reduction of oxygen to water. Acts as an assembly factor that specifically drives the homodimerization of CIV complexes, mediating the formation of mitochondrial respiratory supercomplexes (respirasomes) containing two CIV: supercomplxes with two molecules of CIV show improved activity. The sequence is that of Cytochrome c oxidase subunit 7A1, mitochondrial from Danio rerio (Zebrafish).